Reading from the N-terminus, the 128-residue chain is Large ribosomal subunit protein bL17 (128 aa).

It belongs to the bacterial ribosomal protein bL17 family. Part of the 50S ribosomal subunit. Contacts protein L32.

The polypeptide is Large ribosomal subunit protein bL17 (Erwinia tasmaniensis (strain DSM 17950 / CFBP 7177 / CIP 109463 / NCPPB 4357 / Et1/99)).